Reading from the N-terminus, the 538-residue chain is AAA ATPase forming ring-shaped complexes (538 aa).

Residues 14-54 (ARELRLANHRLGAQNEKLTEALKASREKLAEINSRLADMAE) adopt a coiled-coil conformation. Residue 240-245 (GNGKTL) coordinates ATP.

Belongs to the AAA ATPase family. Homohexamer. Assembles into a hexameric ring structure.

This chain is AAA ATPase forming ring-shaped complexes, found in Corynebacterium urealyticum (strain ATCC 43042 / DSM 7109).